The following is a 230-amino-acid chain: MADS-box transcription factor 50 (230 aa).

An MADS-box domain is found at 1–61; that stretch reads MVRGKTQMKR…GKLYEFASAS (61 aa). Residues 86 to 176 form the K-box domain; the sequence is IEQVKADADG…REKCKNQPPL (91 aa). The tract at residues 209–230 is disordered; that stretch reads GLPGRSRSSGGAAEDSQAMPHS.

In terms of tissue distribution, expressed in mature leaves and at low levels in roots and young panicles.

It localises to the nucleus. Probable transcription factor active in flowering time control. May control internode elongation and promote floral transition phase. May act upstream of the floral regulators MADS1, MADS14, MADS15 and MADS18 in the floral induction pathway. In Oryza sativa subsp. japonica (Rice), this protein is MADS-box transcription factor 50 (MADS50).